A 145-amino-acid chain; its full sequence is Photosystem I reaction center subunit XI (145 aa).

The next 3 membrane-spanning stretches (helical) occupy residues 48–68, 75–95, and 125–145; these read LEIG…LGPL, LLVG…ALTI, and IGAL…SFFA.

The protein belongs to the PsaL family.

Its subcellular location is the plastid. The protein localises to the chloroplast thylakoid membrane. This is Photosystem I reaction center subunit XI from Isochrysis galbana (Marine planktonic alga).